The primary structure comprises 111 residues: Repressed By RIM101 protein 1 (111 aa).

A signal peptide spans 1–19 (MKFSTTLLALTASIAAVMS). Positions 71 to 90 (SGASSATGGSSAAKSGSSSG) are disordered. S81 carries the GPI-anchor amidated serine lipid modification. Positions 82–111 (AAKSGSSSGAGFAPVAGAGSLAAIAGLLLL) are cleaved as a propeptide — removed in mature form.

The GPI-anchor is attached to the protein in the endoplasmic reticulum and serves to target the protein to the cell surface. There, the glucosamine-inositol phospholipid moiety is cleaved off and the GPI-modified mannoprotein is covalently attached via its lipidless GPI glycan remnant to the 1,6-beta-glucan of the outer cell wall layer.

It localises to the secreted. It is found in the cell wall. The protein localises to the membrane. In terms of biological role, probable cell wall protein required for filamentation at low pH. In Candida albicans (strain SC5314 / ATCC MYA-2876) (Yeast), this protein is Repressed By RIM101 protein 1 (RBR1).